Consider the following 5400-residue polypeptide: MAIDGSFNLKLALETFSVRCPKVAAFPCFTSILSKGGEVVDNEEVIHALGDAFLHPEFTVPLVHCFLPIIRNVVDRVVGLLRLVDDLKSSIDYSDDVSSVLDNAMTEGISVIDFYVRRGQRLELHECACLAFSRALHFNTSLLGSILNYFEKAPPPYERILVKDIVSESRMEATDAYLLCLRVSYRFLVIRPEVFSKLWDWSCYLDSMKRLSECPRQQRHFLEKYRDAVWCGIQILSVVLRCSDRLAGCFGFEEEEALSCLLRWEEFCQDIEIEKAGLYIQLPTYTALKSLQQFNTLVPGINKRQSAGLEADEPQMKIRRLDTWDVNSFSEPFEIHSRVKKSFEMVSLAVSQKRPVLLYGPSGSGKSALIRKLADESGNHVVFIHMDDQLDGKTLVGTYVCTDQPGEFRWQPGSLTQAIMNGFWVVLEDIDKAPSDVPLVLSSLLGGSCSFLTSQGEEIRIAETFQLFSTISTPECSVSHIRDAGNSLSPLWRRIVVYPPDRESLQSILGARYPNLGPVAEKLIETFETINSALRPQFSSSTTENSATFSSPSRFSLRDLLKWCERVHGLPSYDGHAVYQEAADIFSASNMSVKNRVAVSEIVASIWNVAVPESQDKPPIQEFSGILKIGRVSLPLGETASHDRSRFVETRTSTRLLEKIARSVEYNEPVLLVGETGTGKTTLVQNLAHWIGQKLTVLNLSQQSDIVDLLGGFKPIDPKLMCTMVYNEFNELARDLKIKDDSKIMKWLQDNFRAKKWHTFLTGLLDIIKGIEGRITERMEGKIGEARSRSGRKRKKPEEELKNCACLRTKVNKIRQQIHSGGMVFTFVEGAFVTALREGHWVLLDEVNLAPPEILGRLIGVLEGVRGSLCLAERGDVMGIPRHLNFRLFACMNPATDAGKRDLPFSFRSRFTEYAVDDDICDDDLEIFVRRFLGGRGSDSKLVANIVWFYKEAKRLSEESLQDGANQKPQYSLRSLYRALEYAIKAEAIGGFQKALYDGFSMFFLSLLDASSAKIVEPIIKRISGENIRSQPLQRYLGELKGSSDKFVGSYVKTKSVIDHLNHLAHAIFIKRYPVLLQGPTSSGKTSLVKYLAAISGNKFVRINNHEQTDIQEYLGSYMTDSSGKLVFHEGALVKAVRGGHWIVLDELNLAPSDVLEALNRLLDDNRELFVPELSETISAHPNFMLFATQNPPTLYGGRKILSRAFRNRFVEIHVDEIPEDELSEILTTKCSIANSHASKMVEVMKDLQRNRQSSKAFAGKHGYITPRDLFRWAYRFRTYDGTSHEELAREGYYILAERLRDDTEKVVVQEVLERHFRVSLAKDDLYNMELPRLDSIQNRKFTWTQSMRRLFFLIDRSYKLREPVLLVGDTGGGKTTICQILSDVKKKRLHILNCHQYTETSDFLGGFFPVRDRSKLITEYENQVKQLELSQALTPFGQDIVICGDISRAEVSIKSVEVALEKYKNGSVIGVAATPQDVDFLEKIRNNMVMLYQKWRAIFVWQDGPLVEAMRAGNIVLVDEISLADDSVLERMNSVLETDRKLSLAEKGGPVLEEVVAHEDFFVLATMNPGGDYGKKELSPALRNRFTEIWVPPITDTEELRSIAFSGLSSLKESNVVDPIINFWEWFNRLHTGRTLTVRDLLSWVAFVNMATESLGPAYAILHGAFLVLLDGLSLGTGFSGRDGQDLREKCFAFLLQQLELFASDTLPLELSRMELYGWGDSKAICEKSKSVRHEGMFGIDPFFISKGDENPEIGGFEFLAPTTHRNVLRVLRAMQLSKPILLEGSPGVGKTSLILALGKYSGHKVVRINLSEQTDMMDLLGSDLPVESDEDMKFAWSDGILLQALKEGSWVLLDELNLAPQSVLEGLNAILDHRAQVFIPELGCTFECPPTFRVFACQNPSTQGGGRKGLPKSFLNRFTKVYVDELVEDDYLFICRSLYPSVPSPLLSKLIALNRQLHDGTMLYRKFGHDGSPWEFNLRDVIRSCQFMQEAIHDLEVESFLNVLYIQRMRTATDRKEVLRIYKAIFDKTPSINPYPRVQLNPAYLVVGTAAIKRNLNQSNIASEQLKLLPEIRQNLEAVAHCVQNKWLCILVGPSSSGKTSVIRILAQLTGYPLNELNLSSATDSSDLLGCFEQYNAFRNFRLVMTRVEHLVDEYNSLLLQSSQEALFSNRSGLVSRWLSYLNKIDSSLVENPLFFLNDSETLSTLEEVVEDLEQVLKEGVLPVSWSKKYLEQISKTILQLQTHEKKQSTKFEWVTGMLIKAIEKGEWVVLKNANLCNPTVLDRINSLVEPCGSITINECGIVNGEPVTVVPHPNFRLFLSVNPKFGEVSRAMRNRGVEVFMMGPHWQLNEDGSNCEELVLRGVERFLALSGIPGYKLVTSMAKAHVHAWLNGQSFGVRITYLELEQWVHLFQLLLMNGNQLLWSLQLSWEHIYLSSLGVTDGKEVVDFVRETYLSDVELSELDSFMGGDLYLPGGWPKPFNLRDLTWYSRETTVRQNCMYLEFLGAQYASHQPKISDNVKSRDRELAAGEPRIIYSIDSWTLKKVLFPKALIGSSCAPDAANFENDLASKMLLFAANWTIEQATEEDIQLYLAWFSWFGSRLQQHCPFLLCFLNTLKVEFEHPIWNHISRCRKNLKFLCRLDPDAVPIPMLSSKLIDVAASNDQSKPYSKSLFESLNSVGVLRRSYQQWLVESNDNHTDVSTFTRFLDSLRVLEKKILCEIVGAPSFSVLIQLYTEVIDNHSFFWSGLVSSSDEYLLFSFWSLIKSIKKMHSFFPGEVQVVLEESKNINNIVLHGHPEKSMLWAYGGHPSLPVSAELFHKQQEFLQLCSTVWPLKSESDEHGNDHLTKAIPFSGPELCLLALEGLCISSYIADEDDVDYVAAVQLDEIYQTFLERLKLEKKRLEDKMGFSEIDNTENITASCCVFCPEIVTTGSGFSSWVKTCFIASSESCSLDVELLAALQHLLVARPTEHQDLVDIRKLLKPALEYSLSSTRPPQTLVAHQKLLWAIDAHASELGVDTKIAGFALEIWYWWHSVLWKNSQIGLMNISDTGNCQILSPSMLIQPVKTATVAQILENVFSVKDYSVQSMKLLSASRYLWKSSQPYQEMPGSLLSIARSLFQQIIYTHQKSFESETFVAIKSVFHAIEKKQNKMDGIQNLISLIGSSSHNKLKSVTHSFVGPLAKRLYSDSSSNALCPTFVEFYCNLGLAWLYLGGLRFHLLNSLDVIDPAMKITCKLLKLEEKISSLELNIKVRGECGYLSGLLYSGNNDESSEHTLSKLKTEHKRLQRKVIFRSDPKKYQDLRRALDEFAGFLTRPISLVNDIEVLDWNQVVEQVFNWQETAISFIDRMSSDYSEYVDITQPIQVSVYEMKLGLSLFVSGALLGKLLNRFDIDMVDSVMETIYALMRFPRDSSIASTTYTECLPPLHLSHGANSRAKSLGLDVGLLHKLISVSSAEDSRKASELQLKVALYKNLHARVLQFVANTGLLDEASFELLDKIYVELARIWMEMKFQAKTKADNLPGLYKFRSRDFKIDSVMEVDISALGKYFPNESFSEWQEYLADDDTKNVKDMTHIDQDEENLEDDWDLIQEHLDSIYSTHNELFGFCDLSEKSGRFCITDSRRLDSFTDSYELGVSMIKGLRGLFTSSLDAKLVPEHLLRLCLENKKNFTSNYQSASKYNFYKDLDGPELGKMVKFLTPLQQRINSLLQEREDHPGLQKLSGVLQMLLAIPSSTPLAKALSGLQFLLCKVHKLQEEGCKLPISDLLEPIISLASSWQKVEFERWPTLLDEVQDQYELNARKLWLPLFSVLFQKDAVEISEHENESISQSLVEFIETSNVGEFRRRLQLLFCFLLQLSMGSSLGIYSSDSHKRRVEMCYNIFGFYIQFLPVVMEQLDLNRKNVETELKEVLKLCRWERPDNYLYNETTKRTRQKVKKLIQKFTDMLRLPVMLVKPDLTKERAQFLPLLDPDLMDGASDMRIEVLVSALDAEQLRDRSSWYVVWWNKLKESVGRFHQEMHYKTLLMGAEHQYSSPVYQGDWKNLWSTVARIGETIAGCSDLWRNSDRDVAKKRALFELLKLLESSGLQKHKFENIEMSNHFKGLLYQPAYDPKHLLLLTHTKSNIHPSMGVEDQNKENSLVEWRVANEFYFKSLASVQLMLNIDRKHSDVTAEQVKRAISFLNHLVEIQRQQRKSAYAFAELFNRFRQCVLSLARLLGDSVGADRKDDSVFSFPQNQHAVFNCLWLQKQLFDNITAMLLEESALLRTVGSTHLDSCQAVKTSSRSLLSFIEILIPIAQNSKASLDRLLLDCNGFIITPSSSLKQFVTQHMVQVLRQNFDQLTDLENQISSFCENNEKSYCRDVLLSQFSPVFKEGKLLAENLNCLLNVRDQSTGMEPKERLFLEENLASIFANVKDVIGKLCSYKDGSLSQEEEMNITTWDGLFKKAENDLNLDNLCKLLSESFGSIEQLLNSSGVLSAGVGDQLKQLQAFLDLLLSFGDCYLKEFLAISKTVSLITHVLASVLADLFTKGFGISKNEEDDDSKVDKSEAAEGTGMGDGVGAKDVSDQIEDEDQLHGTDKKEEEEKEQDDVLGKNKGIEMSDEFDGKEYSVSEDEEEDKEDEGSEDEPLDNGIGDVGSDAEKADEKPWNKDEEDEEENMNEKNESGPSIVDKDTRSRELRAKDDGVETADEPEESNTSDKPEEGNDENVEQDDFDDTDNLEEKIQTKEEALGGLTPDVDNEQIDDDMEMDKTEEVEKEDANQQEEPCSEDQKHPEEGENDQEETQEPSEENMEAEAEDRCGSPQKEEPGNDLEQEPETEPIEGKEVMSEDMMKPNFRNDNISGVESGSQNPHGSNVLGAGSTAPQENLSATDVTDELTDSMDLPSSSNTEMNLMMTNMANGETLTDNLPKMEFPQNQSSTAQQTKVNPYRNVGDALKEWKERVRISSDLGEKQEAENEMEDPDASEYGFASQFDAGTSQALGPALPEQVNTDMREGESEEEKLAGNQDDVSPMDIDDLNPENKPAVQSKPSISNSIAEQVQEPDTDRTHQENSPIHNFGDGNSRMDSMVSVDNTFLGEEACNLDRMQVTDNDSESNQDNQEDPDARSNAVVLWRRCELLTAKPSQELAEQLRLILEPTLASKLSGDYRTGKRINMKKVIPYIASHYRKDKIWLRRTKPNKRDYQVVIAVDDSRSMSESGCGDFAIRALATVCRAMSQLELGSLAVASFGKQGSIKMLHDFGQSFTTESGIKMISNLTFKQENLIEDQPVVNLLRNMNEMLENLASTRRQSYGSNPLQQLVLIIGDGKFHEREKLKRTVRSFLQQKRMVVYLLLDDAEQSVFDLADYVYDGERRPYKKMNYLDSFPFPYYIVLRDIEALPRTLGDVLRQWFELMQSSRD.

AAA-ATPase protomer stretches follow at residues 345 to 571 (MVSL…HGLP), 656 to 986 (LLEK…AIKA), 1050 to 1308 (SYVK…EKVV), 1347 to 1652 (SMRR…VNMA), 1769 to 2023 (VLRV…VLRI), and 2074 to 2347 (IRQN…MMGP). ATP-binding positions include 360-367 (GPSGSGKS), 674-681 (GETGTGKT), 1079-1086 (GPTSSGKT), 1369-1376 (GDTGGGKT), 1786-1793 (GSPGVGKT), and 2095-2102 (GPSSSGKT). The linker stretch occupies residues 2435-4569 (IYLSSLGVTD…DGVGAKDVSD (2135 aa)). Coiled-coil stretches lie at residues 2896–2916 (LERLKLEKKRLEDKMGFSEID), 3233–3253 (AMKITCKLLKLEEKISSLELN), and 3896–3916 (MEQLDLNRKNVETELKEVLKL). Disordered stretches follow at residues 4540–4890 (EEDD…SSSN), 4905–4929 (TLTDNLPKMEFPQNQSSTAQQTKVN), and 4990–5069 (QVNT…RMDS). Positions 4576–4612 (QLHGTDKKEEEEKEQDDVLGKNKGIEMSDEFDGKEYS) are enriched in basic and acidic residues. The span at 4613–4631 (VSEDEEEDKEDEGSEDEPL) shows a compositional bias: acidic residues. Composition is skewed to basic and acidic residues over residues 4641-4652 (DAEKADEKPWNK) and 4661-4687 (MNEKNESGPSIVDKDTRSRELRAKDDG). 2 stretches are compositionally biased toward acidic residues: residues 4688–4698 (VETADEPEESN) and 4706–4721 (GNDENVEQDDFDDTDN). The segment covering 4722–4732 (LEEKIQTKEEA) has biased composition (basic and acidic residues). Over residues 4740–4750 (VDNEQIDDDME) the composition is skewed to acidic residues. The span at 4751 to 4762 (MDKTEEVEKEDA) shows a compositional bias: basic and acidic residues. Residues 4779 to 4798 (GENDQEETQEPSEENMEAEA) show a composition bias toward acidic residues. Residues 4799-4810 (EDRCGSPQKEEP) show a composition bias toward basic and acidic residues. Over residues 4811–4822 (GNDLEQEPETEP) the composition is skewed to acidic residues. Residues 4823 to 4834 (IEGKEVMSEDMM) show a composition bias toward basic and acidic residues. Polar residues-rich tracts occupy residues 4839–4855 (RNDNISGVESGSQNPHG), 4864–4874 (TAPQENLSATD), 4916–4928 (PQNQSSTAQQTKV), and 5030–5040 (SKPSISNSIAE). The Nuclear localization signal signature appears at 5157 to 5164 (MKKVIPYI). A VWFA domain is found at 5186-5387 (QVVIAVDDSR…EALPRTLGDV (202 aa)). Residues 5271-5291 (VVNLLRNMNEMLENLASTRRQ) adopt a coiled-coil conformation.

Belongs to the midasin family. As to quaternary structure, associates with pre-60S ribosomes in the nucleoplasm. As to expression, constitutively and ubiquitously expressed. Mostly observed in the shoot apex and root tip, and, to a lower extent, in mature seeds, seedling (excluding the hypocotyl), roots, stems, leaves and flowers.

Its subcellular location is the nucleus. The protein localises to the nucleolus. It is found in the nucleoplasm. In terms of biological role, nuclear chaperone required for maturation and nuclear export of pre-60S ribosome subunits. Functions at successive maturation steps to remove ribosomal factors at critical transition points, first driving the exit of early pre-60S particles from the nucleolus and then driving late pre-60S particles from the nucleus. Required for female gametophyte development. Involved in the expression regulation of genes related to plant growth and development. The protein is Midasin of Arabidopsis thaliana (Mouse-ear cress).